The primary structure comprises 455 residues: Probable carboxypeptidase MCYG_07204 (455 aa).

The signal sequence occupies residues 1 to 21 (MQKTYLLALLVSSLASVRSLA). N93 is a glycosylation site (N-linked (GlcNAc...) asparagine). D170 contributes to the Zn(2+) binding site. The active-site Proton acceptor is E202. E203 lines the Zn(2+) pocket. N-linked (GlcNAc...) asparagine glycosylation occurs at N390.

The protein belongs to the peptidase M20A family. It depends on Zn(2+) as a cofactor.

The protein resides in the secreted. This Arthroderma otae (strain ATCC MYA-4605 / CBS 113480) (Microsporum canis) protein is Probable carboxypeptidase MCYG_07204.